The primary structure comprises 304 residues: N-acetylglucosaminyl-phosphatidylinositol de-N-acetylase (304 aa).

The Lumenal portion of the chain corresponds to 1-20 (MKMLRRTKVNFSKLLYKITK). Residues 21 to 38 (LAIVLTILYIYFTPKIVS) traverse the membrane as a helical segment. The Cytoplasmic portion of the chain corresponds to 39–304 (RNNASLQHIF…FVNEFDVYTY (266 aa)).

This sequence belongs to the PIGL family.

It localises to the endoplasmic reticulum membrane. The enzyme catalyses a 6-(N-acetyl-alpha-D-glucosaminyl)-1-(1,2-diacyl-sn-glycero-3-phospho)-1D-myo-inositol + H2O = a 6-(alpha-D-glucosaminyl)-1-(1,2-diacyl-sn-glycero-3-phospho)-1D-myo-inositol + acetate. Its pathway is glycolipid biosynthesis; glycosylphosphatidylinositol-anchor biosynthesis. Its function is as follows. Involved in the second step of GPI biosynthesis. De-N-acetylation of N-acetylglucosaminyl-phosphatidylinositol. The protein is N-acetylglucosaminyl-phosphatidylinositol de-N-acetylase (GPI12) of Saccharomyces cerevisiae (strain ATCC 204508 / S288c) (Baker's yeast).